The following is a 247-amino-acid chain: Uridylate kinase (247 aa).

Position 21–24 (21–24) interacts with ATP; that stretch reads KVSG. Position 63 (Gly-63) interacts with UMP. Residues Gly-64 and Arg-68 each coordinate ATP. UMP is bound by residues Asp-83 and 144–151; that span reads TGNPFCTT. 4 residues coordinate ATP: Thr-171, Gln-172, Tyr-177, and Asp-180.

It belongs to the UMP kinase family. Homohexamer.

It is found in the cytoplasm. It carries out the reaction UMP + ATP = UDP + ADP. Its pathway is pyrimidine metabolism; CTP biosynthesis via de novo pathway; UDP from UMP (UMPK route): step 1/1. With respect to regulation, inhibited by UTP. Catalyzes the reversible phosphorylation of UMP to UDP. In Rickettsia rickettsii (strain Sheila Smith), this protein is Uridylate kinase.